The chain runs to 98 residues: C-X-C motif chemokine 10 (98 aa).

Positions M1–G21 are cleaved as a signal peptide. R26 carries the post-translational modification Citrulline. Disulfide bonds link C30–C57 and C32–C74.

Belongs to the intercrine alpha (chemokine CxC) family. As to quaternary structure, monomer, dimer, and tetramer. Interacts with CXCR3 (via N-terminus).

It localises to the secreted. In terms of biological role, pro-inflammatory cytokine that is involved in a wide variety of processes such as chemotaxis, differentiation, and activation of peripheral immune cells, regulation of cell growth, apoptosis and modulation of angiostatic effects. Plays thereby an important role during viral infections by stimulating the activation and migration of immune cells to the infected sites. Mechanistically, binding of CXCL10 to the CXCR3 receptor activates G protein-mediated signaling and results in downstream activation of phospholipase C-dependent pathway, an increase in intracellular calcium production and actin reorganization. In turn, recruitment of activated Th1 lymphocytes occurs at sites of inflammation. Activation of the CXCL10/CXCR3 axis also plays an important role in neurons in response to brain injury for activating microglia, the resident macrophage population of the central nervous system, and directing them to the lesion site. This recruitment is an essential element for neuronal reorganization. In Canis lupus familiaris (Dog), this protein is C-X-C motif chemokine 10 (CXCL10).